A 93-amino-acid polypeptide reads, in one-letter code: MIHVYTSTGAWGWAGSCCWLWSFCPPACIGCIEEHLLSWPQVQGSSEQEIHYASLQRLPVSSSEGPDLRDRDKRGTKEDPRADYACIAENKPT.

The helical transmembrane segment at 14 to 32 (AGSCCWLWSFCPPACIGCI) threads the bilayer. Serine 54 carries the phosphoserine modification. The segment at 57 to 82 (RLPVSSSEGPDLRDRDKRGTKEDPRA) is disordered. The span at 66–82 (PDLRDRDKRGTKEDPRA) shows a compositional bias: basic and acidic residues.

Belongs to the LST1 family.

The protein resides in the membrane. The protein localises to the golgi apparatus membrane. It is found in the endomembrane system. Its function is as follows. Possible role in modulating immune responses. Has an inhibitory effect on lymphocyte proliferation. Induces morphological changes including production of filopodia and microspikes when overexpressed in a variety of cell types and may be involved in dendritic cell maturation. This is Leukocyte-specific transcript 1 protein (LST1) from Macaca mulatta (Rhesus macaque).